Consider the following 715-residue polypeptide: Lanosterol synthase erg7B (715 aa).

The stretch at 111–153 (AIEIKNYLMARANPVDGGWGLHSEGDSSVFGTSLNYTVLRLLG) is one PFTB 1 repeat. D445 serves as the catalytic Proton donor. 2 PFTB repeats span residues 550-590 (IQRG…RSAG) and 599-640 (VRRG…VVQT).

Belongs to the terpene cyclase/mutase family.

The protein localises to the lipid droplet. It localises to the endoplasmic reticulum membrane. It catalyses the reaction (S)-2,3-epoxysqualene = lanosterol. It participates in steroid metabolism; ergosterol biosynthesis. Functionally, lanosterol synthase; part of the third module of ergosterol biosynthesis pathway that includes the late steps of the pathway. ERG7A and ERG7B catalyze the cyclization of (S)-2,3 oxidosqualene to lanosterol, a reaction that forms the sterol core. The third module or late pathway involves the ergosterol synthesis itself through consecutive reactions that mainly occur in the endoplasmic reticulum (ER) membrane. Firstly, the squalene synthase erg9 catalyzes the condensation of 2 farnesyl pyrophosphate moieties to form squalene, which is the precursor of all steroids. Squalene synthase is crucial for balancing the incorporation of farnesyl diphosphate (FPP) into sterol and nonsterol isoprene synthesis. Secondly, squalene is converted into lanosterol by the consecutive action of the squalene epoxidase erg1 and the lanosterol synthase erg7. Then, the delta(24)-sterol C-methyltransferase erg6 methylates lanosterol at C-24 to produce eburicol. Eburicol is the substrate of the sterol 14-alpha demethylase encoded by cyp51A and cyp51B, to yield 4,4,24-trimethyl ergosta-8,14,24(28)-trienol. The C-14 reductase erg24 then reduces the C14=C15 double bond which leads to 4,4-dimethylfecosterol. A sequence of further demethylations at C-4, involving the C-4 demethylation complex containing the C-4 methylsterol oxidases erg25A or erg25B, the sterol-4-alpha-carboxylate 3-dehydrogenase erg26 and the 3-keto-steroid reductase erg27, leads to the production of fecosterol via 4-methylfecosterol. The C-8 sterol isomerase erg2 then catalyzes the reaction which results in unsaturation at C-7 in the B ring of sterols and thus converts fecosterol to episterol. The sterol-C5-desaturase erg3B then catalyzes the introduction of a C-5 double bond in the B ring to produce 5-dehydroepisterol. The 2 other sterol-C5-desaturases, erg3A and erg3C, seem to be less important in ergosterol biosynthesis. The C-22 sterol desaturase erg5 further converts 5-dehydroepisterol into ergosta-5,7,22,24(28)-tetraen-3beta-ol by forming the C-22(23) double bond in the sterol side chain. Finally, ergosta-5,7,22,24(28)-tetraen-3beta-ol is substrate of the C-24(28) sterol reductases erg4A and erg4B to produce ergosterol. Possible alternative sterol biosynthetic pathways might exist from fecosterol to ergosterol, depending on the activities of the erg3 isoforms. This chain is Lanosterol synthase erg7B, found in Aspergillus fumigatus (strain ATCC MYA-4609 / CBS 101355 / FGSC A1100 / Af293) (Neosartorya fumigata).